Reading from the N-terminus, the 526-residue chain is Butyrophilin subfamily 1 member A1 (526 aa).

The N-terminal stretch at 1–26 is a signal peptide; it reads MAVFPSSGLPRCLLTLILLQLPKLDS. Ig-like V-type domains are found at residues 27-138 and 148-234; these read APFD…ALVH and PHIS…VEIS. Over 27–242 the chain is Extracellular; sequence APFDVIGPPE…ISIPASSLPR (216 aa). 2 disulfides stabilise this stretch: Cys50/Cys124 and Cys164/Cys218. N-linked (GlcNAc...) asparagine glycans are attached at residues Asn55 and Asn215. A helical transmembrane segment spans residues 243-269; the sequence is LTPWIVAVAVILMVLGLLTIGSIFFTW. Over 270-526 the chain is Cytoplasmic; sequence RLYNERPRER…IPTQPSQGAP (257 aa). The B30.2/SPRY domain occupies 285-479; it reads SKERLLEELK…LTICPIADGP (195 aa). A disordered region spans residues 495–526; that stretch reads IPLSPMGEDSAPRDADTLHSKLIPTQPSQGAP. The span at 504 to 513 shows a compositional bias: basic and acidic residues; that stretch reads SAPRDADTLH. The segment covering 517–526 has biased composition (polar residues); it reads IPTQPSQGAP.

Belongs to the immunoglobulin superfamily. BTN/MOG family. As to quaternary structure, seems to associate with xanthine dehydrogenase/oxidase. N-glycosylated.

Its subcellular location is the membrane. It is found in the secreted. In terms of biological role, may function in the secretion of milk-fat droplets. May act as a specific membrane-associated receptor for the association of cytoplasmic droplets with the apical plasma membrane. Inhibits the proliferation of CD4 and CD8 T-cells activated by anti-CD3 antibodies, T-cell metabolism and IL2 and IFNG secretion. The polypeptide is Butyrophilin subfamily 1 member A1 (BTN1A1) (Homo sapiens (Human)).